Reading from the N-terminus, the 432-residue chain is Glutamate-1-semialdehyde 2,1-aminomutase (432 aa).

The residue at position 270 (lysine 270) is an N6-(pyridoxal phosphate)lysine.

This sequence belongs to the class-III pyridoxal-phosphate-dependent aminotransferase family. HemL subfamily. In terms of assembly, homodimer. The cofactor is pyridoxal 5'-phosphate.

Its subcellular location is the cytoplasm. It carries out the reaction (S)-4-amino-5-oxopentanoate = 5-aminolevulinate. The protein operates within porphyrin-containing compound metabolism; protoporphyrin-IX biosynthesis; 5-aminolevulinate from L-glutamyl-tRNA(Glu): step 2/2. This chain is Glutamate-1-semialdehyde 2,1-aminomutase, found in Acinetobacter baumannii (strain ACICU).